A 409-amino-acid chain; its full sequence is PPE family protein PPE32 (409 aa).

This sequence belongs to the mycobacterial PPE family. In terms of assembly, interacts with host Toll-like receptor 2 (TLR2).

Its subcellular location is the secreted. The protein localises to the cell wall. It is found in the cell surface. In terms of biological role, virulence factor that modulates the production of host cytokines. This Mycobacterium tuberculosis (strain CDC 1551 / Oshkosh) protein is PPE family protein PPE32.